Here is a 161-residue protein sequence, read N- to C-terminus: Nuclear transcription factor Y subunit B-3 (161 aa).

A disordered region spans residues 1 to 23 (MADSDNDSGGHKDGGNASTREQD). The residue at position 2 (A2) is an N-acetylalanine. Residues 8-23 (SGGHKDGGNASTREQD) are compositionally biased toward basic and acidic residues. The DNA-binding element occupies 26-32 (LPIANVS). A subunit association domain (SAD) region spans residues 53–64 (VQECVSEFISFI). The tract at residues 114–146 (EKTTTAGRQGDKEGGGGGGGAGSGSGGAPMYGG) is disordered. A compositionally biased stretch (gly residues) spans 128–146 (GGGGGGAGSGSGGAPMYGG).

The protein belongs to the NFYB/HAP3 subunit family. Heterotrimeric transcription factor composed of three components, NF-YA, NF-YB and NF-YC. NF-YB and NF-YC must interact and dimerize for NF-YA association and DNA binding. Component of a heat stress-inducible transcriptional complex with NF-YA and NF-YB subunits made, at least, of NFYA2, NFYB3 and DPB3-1 in cooperation with DREB2A. Binds directly with DPB3-1. Ubiquitous. Expressed in seedlings, petioles, hypocotyls, reproductive organ tissues and leaves.

The protein localises to the nucleus. It is found in the cytoplasm. It localises to the cytosol. Functionally, component of the NF-Y/HAP transcription factor complex. The NF-Y complex stimulates the transcription of various genes by recognizing and binding to a CCAAT motif in promoters. Promotes the expression of heat stress-inducible genes by contributing to the formation of a heat stress-specific transcriptional complex with NF-Y subunits (e.g. DPB3-1, NF-YA2 and NF-YB3) and DREB2A at the promoter of target genes, thus promoting heat tolerance. This chain is Nuclear transcription factor Y subunit B-3, found in Arabidopsis thaliana (Mouse-ear cress).